Consider the following 61-residue polypeptide: MECHNQQSSQPPTTKTCPGETNCYKKQWSDHRGTIIERGCGCPSVKKGVKINCCTTDRCNN.

Polar residues predominate over residues 1 to 16 (MECHNQQSSQPPTTKT). The segment at 1–20 (MECHNQQSSQPPTTKTCPGE) is disordered. Disulfide bonds link cysteine 3–cysteine 23, cysteine 17–cysteine 40, cysteine 42–cysteine 53, and cysteine 54–cysteine 59.

Belongs to the three-finger toxin family. Short-chain subfamily. Type I alpha-neurotoxin sub-subfamily. As to expression, expressed by the venom gland.

The protein resides in the secreted. Functionally, binds to muscle nicotinic acetylcholine receptor (nAChR) and inhibit acetylcholine from binding to the receptor, thereby impairing neuromuscular transmission. This Naja melanoleuca (Forest cobra) protein is Short neurotoxin 1.